Reading from the N-terminus, the 550-residue chain is 65-kDa microtubule-associated protein 5 (550 aa).

Coiled-coil stretches lie at residues 46-174 and 288-310; these read NKKV…QKVN and IREAEDEVRRLNSLKSSKMKELV. The disordered stretch occupies residues 471–531; it reads QFREQKRLQG…PGRSVTSGGK (61 aa). Residues 502–511 are compositionally biased toward polar residues; it reads QSLNTDNVTK.

This sequence belongs to the MAP65/ASE1 family. In terms of assembly, forms a dimer. Binds to MT, mostly with coaligned MT, both between parallel or antiparallel, forming thick bundles. Bundles polymerized MT via the formation of 25-nm crossbridges with cortical MT.

The protein localises to the nucleus. It is found in the cytoplasm. Its subcellular location is the cytoskeleton. It localises to the spindle. The protein resides in the phragmoplast. The protein localises to the cell cortex. It is found in the cell junction. Its subcellular location is the plasmodesma. Functionally, microtubule-associated protein that bundle and stabilize adjacent microtubules (MT) of the cell cortex. Confers MT resistance to the drug oryzalin. Promotes the formation of a planar network of antiparallel microtubules. The chain is 65-kDa microtubule-associated protein 5 (MAP65-5) from Arabidopsis thaliana (Mouse-ear cress).